A 196-amino-acid chain; its full sequence is MEFVYPKANLIAGVDEVGRGPLVGAVVTAAVILDPANPIQGLMDSKKLTEKKRNALYDEIKEKALCWAIGRAEPEEIDKLNILWATMKAMERAVAGLSITPDMVLVDGNRCPNLPMASQAVIKGDSLVQEISAASILAKVTRDREMEQLDKLYPDYGFAKHKGYPTAFHMEKLASLGATPYHRKSFAPVKRALNLV.

The RNase H type-2 domain maps to 9–196 (NLIAGVDEVG…APVKRALNLV (188 aa)). D15, E16, and D107 together coordinate a divalent metal cation.

Belongs to the RNase HII family. Requires Mn(2+) as cofactor. It depends on Mg(2+) as a cofactor.

The protein localises to the cytoplasm. It catalyses the reaction Endonucleolytic cleavage to 5'-phosphomonoester.. In terms of biological role, endonuclease that specifically degrades the RNA of RNA-DNA hybrids. The chain is Ribonuclease HII from Proteus mirabilis (strain HI4320).